The following is a 196-amino-acid chain: Peptidyl-tRNA hydrolase (196 aa).

Position 18 (Tyr18) interacts with tRNA. Catalysis depends on His23, which acts as the Proton acceptor. 3 residues coordinate tRNA: Phe69, Asn71, and Asn117.

The protein belongs to the PTH family. Monomer.

The protein resides in the cytoplasm. The enzyme catalyses an N-acyl-L-alpha-aminoacyl-tRNA + H2O = an N-acyl-L-amino acid + a tRNA + H(+). Functionally, hydrolyzes ribosome-free peptidyl-tRNAs (with 1 or more amino acids incorporated), which drop off the ribosome during protein synthesis, or as a result of ribosome stalling. Catalyzes the release of premature peptidyl moieties from peptidyl-tRNA molecules trapped in stalled 50S ribosomal subunits, and thus maintains levels of free tRNAs and 50S ribosomes. The sequence is that of Peptidyl-tRNA hydrolase from Aliivibrio salmonicida (strain LFI1238) (Vibrio salmonicida (strain LFI1238)).